A 550-amino-acid polypeptide reads, in one-letter code: Pectinesterase 2.2 (550 aa).

Asparagine 179 is a glycosylation site (N-linked (GlcNAc...) asparagine). 2 residues coordinate substrate: threonine 312 and glutamine 342. An intrachain disulfide couples cysteine 331 to cysteine 358. The active-site Proton donor is aspartate 365. Aspartate 386 acts as the Nucleophile in catalysis. Residues cysteine 399 and cysteine 433 are joined by a disulfide bond. 2 residues coordinate substrate: arginine 454 and tryptophan 456.

This sequence in the N-terminal section; belongs to the PMEI family. The protein in the C-terminal section; belongs to the pectinesterase family.

The protein localises to the secreted. The protein resides in the cell wall. It carries out the reaction [(1-&gt;4)-alpha-D-galacturonosyl methyl ester](n) + n H2O = [(1-&gt;4)-alpha-D-galacturonosyl](n) + n methanol + n H(+). Its pathway is glycan metabolism; pectin degradation; 2-dehydro-3-deoxy-D-gluconate from pectin: step 1/5. Its function is as follows. Pectinesterase may play a role in cell wall metabolism during fruit growth and development prior to ripening and may be required for preparing cell walls for softening by polygalacturonase during fruit ripening. The chain is Pectinesterase 2.2 (PME2.2) from Solanum lycopersicum (Tomato).